A 302-amino-acid polypeptide reads, in one-letter code: MAFQVKIHQIRAFVEVARQGSIRGASRMLNMSQPALSKSIQELEEGLAAQLFFRRSKGVTLTDAGESFYQHASLILEELRAAQEDIRQRQGQLAGQINIGMGASISRSLMPAVISRFHQQHPQVKVRIMEGQLVSMINELRQGELDFTINTYYQGPYDHEFTFEKLLEKQFAIFCRPGHPAIGARSIKQLLDYSWTMPTPHGSYYKQLSELLDDQAQTPQVGVVCETFSACISLVAKSDFLSKLPEEMGCDPLHGQGLVMLPVSEILPKAAYYLIQRRDSRQTPLTASLITQFRRECGYLQS.

In terms of domain architecture, HTH lysR-type spans 5-62 (VKIHQIRAFVEVARQGSIRGASRMLNMSQPALSKSIQELEEGLAAQLFFRRSKGVTLT). A DNA-binding region (H-T-H motif) is located at residues 22 to 41 (IRGASRMLNMSQPALSKSIQ).

It belongs to the LysR transcriptional regulatory family.

Its function is as follows. Could be the regulator of the abg operon. The sequence is that of HTH-type transcriptional regulator AbgR (abgR) from Escherichia coli (strain K12).